The primary structure comprises 700 residues: Calpain-2 catalytic subunit (700 aa).

An N-acetylalanine modification is found at alanine 2. A propeptide spans 2-19 (anchors to the small subunit); sequence AGIAAKLVKDREAAEGLG. The Calpain catalytic domain occupies 45–344; the sequence is LFQDPSFPAI…YSRLEICNLT (300 aa). Ca(2+)-binding residues include isoleucine 89, glycine 91, and aspartate 96. The active site involves cysteine 105. The Ca(2+) site is built by glutamate 175, glutamine 229, and lysine 230. Residues histidine 262 and asparagine 286 contribute to the active site. The Ca(2+) site is built by glutamate 292, aspartate 299, and glutamate 323. The domain III stretch occupies residues 345 to 514; that stretch reads PDTLTSDTYK…KKADYQAVDD (170 aa). Residues 515-529 form a linker region; it reads EIEANLEEFDISEDD. Positions 530–700 are domain IV; sequence IDDGFRRLFA…LISWLCFSVL (171 aa). Ca(2+)-binding residues include alanine 542, aspartate 545, glutamate 547, glutamate 552, aspartate 585, aspartate 587, serine 589, lysine 591, glutamate 596, aspartate 615, aspartate 617, serine 619, threonine 621, glutamate 626, aspartate 658, and asparagine 661. 2 consecutive EF-hand domains span residues 572-605 and 602-637; these read FSIE…TKIQ and TKIQ…AGFK. The 34-residue stretch at 667–700 folds into the EF-hand 3 domain; sequence VRLETLFKIFKQLDPENTGTIELDLISWLCFSVL.

The protein belongs to the peptidase C2 family. In terms of assembly, forms a heterodimer with a small (regulatory) subunit (CAPNS1). Interacts with CPEB3; this leads to cleavage of CPEB3. The cofactor is Ca(2+).

The protein localises to the cytoplasm. It is found in the cell membrane. The catalysed reaction is Broad endopeptidase specificity.. With respect to regulation, activated by 200-1000 micromolar concentrations of calcium and inhibited by calpastatin. In terms of biological role, calcium-regulated non-lysosomal thiol-protease which catalyzes limited proteolysis of substrates involved in cytoskeletal remodeling and signal transduction. Proteolytically cleaves MYOC at 'Arg-226'. Proteolytically cleaves CPEB3 following neuronal stimulation which abolishes CPEB3 translational repressor activity, leading to translation of CPEB3 target mRNAs. In Macaca fascicularis (Crab-eating macaque), this protein is Calpain-2 catalytic subunit (CAPN2).